Reading from the N-terminus, the 99-residue chain is Signal recognition particle 19 kDa protein (99 aa).

Belongs to the SRP19 family. As to quaternary structure, part of the signal recognition particle protein translocation system, which is composed of SRP and FtsY. Archaeal SRP consists of a 7S RNA molecule of 300 nucleotides and two protein subunits: SRP54 and SRP19.

The protein localises to the cytoplasm. Its function is as follows. Involved in targeting and insertion of nascent membrane proteins into the cytoplasmic membrane. Binds directly to 7S RNA and mediates binding of the 54 kDa subunit of the SRP. This is Signal recognition particle 19 kDa protein from Pyrococcus abyssi (strain GE5 / Orsay).